A 468-amino-acid polypeptide reads, in one-letter code: UDP-N-acetylmuramate--L-alanine ligase (468 aa).

Residue 114–120 (GTHGKTT) participates in ATP binding.

Belongs to the MurCDEF family.

The protein resides in the cytoplasm. It catalyses the reaction UDP-N-acetyl-alpha-D-muramate + L-alanine + ATP = UDP-N-acetyl-alpha-D-muramoyl-L-alanine + ADP + phosphate + H(+). The protein operates within cell wall biogenesis; peptidoglycan biosynthesis. In terms of biological role, cell wall formation. The polypeptide is UDP-N-acetylmuramate--L-alanine ligase (Brucella anthropi (strain ATCC 49188 / DSM 6882 / CCUG 24695 / JCM 21032 / LMG 3331 / NBRC 15819 / NCTC 12168 / Alc 37) (Ochrobactrum anthropi)).